The primary structure comprises 113 residues: U11-theraphotoxin-Hhn1a (113 aa).

Residues 1–21 form the signal peptide; it reads MNTVRVTFLLVFVLAVSLGQA. A propeptide spanning residues 22–74 is cleaved from the precursor; it reads DKDENRMEMQEKTEQGKSYLDFAENLLLQKLEELEAKLLEEDSEESRNSRQKR. Residues 61-83 form a disordered region; that stretch reads EEDSEESRNSRQKRCIGEGVPCD. Disulfide bonds link Cys75-Cys90, Cys82-Cys95, and Cys89-Cys110.

Belongs to the neurotoxin 14 (magi-1) family. 01 (HNTX-16) subfamily. As to expression, expressed by the venom gland.

Its subcellular location is the secreted. Its function is as follows. Probable ion channel inhibitor. This Cyriopagopus hainanus (Chinese bird spider) protein is U11-theraphotoxin-Hhn1a.